The chain runs to 101 residues: Urease subunit beta 1 (101 aa).

The protein belongs to the urease beta subunit family. Heterotrimer of UreA (gamma), UreB (beta) and UreC (alpha) subunits. Three heterotrimers associate to form the active enzyme.

It localises to the cytoplasm. The enzyme catalyses urea + 2 H2O + H(+) = hydrogencarbonate + 2 NH4(+). Its pathway is nitrogen metabolism; urea degradation; CO(2) and NH(3) from urea (urease route): step 1/1. Functionally, disruption of the ure1 gene cluster suggests that it protects brucellae during their passage through the stomach. The major route of infection in human brucellosis is oral. This chain is Urease subunit beta 1, found in Brucella abortus (strain 2308).